A 474-amino-acid chain; its full sequence is tRNA (adenine(58)-N(1))-methyltransferase catalytic subunit trm61 (474 aa).

The interval 75–109 is disordered; that stretch reads DTGSRGRTQKMKRKADELDSSTQAEDKPSPQTPVA. S-adenosyl-L-methionine contacts are provided by residues 163–165, E197, R202, 225–226, and D250; these read SGS and DV. Disordered regions lie at residues 356-390 and 423-474; these read LFRATQNQSDGDSTPAPKAENEAKGGQQESEVPVY and DEKR…SQKE. The segment covering 358 to 367 has biased composition (polar residues); it reads RATQNQSDGD. Residues 423 to 432 show a composition bias toward basic and acidic residues; that stretch reads DEKRCREKWP. Positions 434 to 443 are enriched in polar residues; the sequence is NRVQEPQGPQ. The span at 450-474 shows a compositional bias: basic and acidic residues; it reads KRESREKRDLQRKEQSQPETESQKE.

The protein belongs to the class I-like SAM-binding methyltransferase superfamily. TRM61 family. Heterotetramer; composed of two copies of TRM6 and two copies of TRM61.

The protein localises to the nucleus. The catalysed reaction is adenosine(58) in tRNA + S-adenosyl-L-methionine = N(1)-methyladenosine(58) in tRNA + S-adenosyl-L-homocysteine + H(+). In terms of biological role, catalytic subunit of tRNA (adenine-N(1)-)-methyltransferase, which catalyzes the formation of N(1)-methyladenine at position 58 (m1A58) in initiator methionyl-tRNA. The chain is tRNA (adenine(58)-N(1))-methyltransferase catalytic subunit trm61 (trm61) from Aspergillus oryzae (strain ATCC 42149 / RIB 40) (Yellow koji mold).